A 275-amino-acid chain; its full sequence is Uroporphyrinogen-III synthase (275 aa).

This sequence belongs to the uroporphyrinogen-III synthase family.

The catalysed reaction is hydroxymethylbilane = uroporphyrinogen III + H2O. It functions in the pathway porphyrin-containing compound metabolism; protoporphyrin-IX biosynthesis; coproporphyrinogen-III from 5-aminolevulinate: step 3/4. Functionally, catalyzes cyclization of the linear tetrapyrrole, hydroxymethylbilane, to the macrocyclic uroporphyrinogen III, the fourth step in the heme biosynthetic pathway. In Saccharomyces cerevisiae (strain ATCC 204508 / S288c) (Baker's yeast), this protein is Uroporphyrinogen-III synthase.